A 298-amino-acid chain; its full sequence is MLCREPRLYSCQRLKEAAKRQGHEMDILDPNRCLLKLSQNPPHFQIFYQENSGSKPYLLPDYDAVLPRFGTTSTQMGCSVLQHFEGKGTFCLNSSQAFLNARDKWKSLQLLLKTGVPVPNSFLSGGEVQAQATIPHISSPTILKMLNGSQGIGVILAEKPQSAVSIMEAFKQTNISMLQQDFIEEAGNADIRCFVIGDQVVATMQRIGQDGEFRANCHRGGKTEKIILSDDEKQIAIRATKAIGLDVAGVDLIRSKNGLLVLEVNASPGLEMIEKTSGVDIAAEIIDYIEINAFINLR.

In terms of domain architecture, ATP-grasp spans 108–290 (LQLLLKTGVP…IAAEIIDYIE (183 aa)). Residues Lys-144, 181–182 (DF), Asp-190, and 214–216 (RAN) each bind ATP. Mg(2+)-binding residues include Asp-251, Glu-263, and Asn-265. Asp-251, Glu-263, and Asn-265 together coordinate Mn(2+).

It belongs to the RimK family. Requires Mg(2+) as cofactor. Mn(2+) is required as a cofactor.

This Haemophilus influenzae (strain PittEE) protein is Probable alpha-L-glutamate ligase.